A 633-amino-acid chain; its full sequence is Polypeptide N-acetylgalactosaminyltransferase 3 (633 aa).

Topologically, residues 1-19 (MAHLKRLVKLHIKRHYHKK) are cytoplasmic. The helical; Signal-anchor for type II membrane protein transmembrane segment at 20 to 37 (FWKLGAVIFFFIIVLVLM) threads the bilayer. Residues 38–633 (QREVSVQYSK…LQKWILSQND (596 aa)) lie on the Lumenal side of the membrane. Asn-132 is a glycosylation site (N-linked (GlcNAc...) asparagine). The catalytic subdomain A stretch occupies residues 184–293 (LPTTSVIIVF…YGWLEPLLAR (110 aa)). The Mn(2+) site is built by Asp-277 and His-279. The N-linked (GlcNAc...) asparagine glycan is linked to Asn-297. The segment at 356 to 418 (PIKTPTFAGG…PCSVVGHVFR (63 aa)) is catalytic subdomain B. A Mn(2+)-binding site is contributed by His-415. N-linked (GlcNAc...) asparagine glycosylation is present at Asn-484. The region spanning 504–630 (VISGYIKSVG…SDPLQKWILS (127 aa)) is the Ricin B-type lectin domain. Cys-517 and Cys-535 are oxidised to a cystine. The UDP-N-acetyl-alpha-D-galactosamine site is built by Asp-519, Glu-522, His-536, and Asn-541. 2 disulfide bridges follow: Cys-561–Cys-574 and Cys-605–Cys-618.

It belongs to the glycosyltransferase 2 family. GalNAc-T subfamily. The cofactor is Mn(2+). As to expression, expressed in organs that contain secretory epithelial glands. Highly expressed in pancreas, skin, kidney and testis. Weakly expressed in prostate, ovary, intestine and colon. Also expressed in placenta and lung and fetal lung and fetal kidney.

Its subcellular location is the golgi apparatus. The protein localises to the golgi stack membrane. The enzyme catalyses L-seryl-[protein] + UDP-N-acetyl-alpha-D-galactosamine = a 3-O-[N-acetyl-alpha-D-galactosaminyl]-L-seryl-[protein] + UDP + H(+). The catalysed reaction is L-threonyl-[protein] + UDP-N-acetyl-alpha-D-galactosamine = a 3-O-[N-acetyl-alpha-D-galactosaminyl]-L-threonyl-[protein] + UDP + H(+). It functions in the pathway protein modification; protein glycosylation. Its function is as follows. Catalyzes the initial reaction in O-linked oligosaccharide biosynthesis, the transfer of an N-acetyl-D-galactosamine residue to a serine or threonine residue on the protein receptor. Has activity toward HIV envelope glycoprotein gp120, EA2, MUC2, MUC1A and MUC5AC. Probably glycosylates fibronectin in vivo. Glycosylates FGF23. This chain is Polypeptide N-acetylgalactosaminyltransferase 3 (GALNT3), found in Homo sapiens (Human).